A 952-amino-acid chain; its full sequence is Respiratory burst oxidase homolog protein E (952 aa).

Residues 1–392 are Cytoplasmic-facing; the sequence is MKLSPLSFST…QCLILDNWQR (392 aa). 2 EF-hand-like regions span residues 211-219 and 245-256; these read SKNGLLARD and RRQKLEKITKDE. EF-hand domains are found at residues 268–303 and 312–347; these read SFDARLQIFFDMADSNEDGKITREEIKELLMLSASA and QAEEYASLIMEELDPENFGYIELWQLETLLLQRDAY. Ca(2+)-binding residues include D281, N283, D285, K287, and E292. A helical transmembrane segment spans residues 393–413; sequence SWVLLVWVMLMAILFVWKFLE. The Extracellular portion of the chain corresponds to 414 to 475; the sequence is YREKAAFKVM…PFDDNINFHK (62 aa). Positions 431 to 587 constitute a Ferric oxidoreductase domain; that stretch reads KGAAETLKLN…LLVVVYIMLI (157 aa). Residues 476-496 traverse the membrane as a helical segment; it reads IIACAIAIGILVHAGTHLACD. The Cytoplasmic segment spans residues 497-531; it reads FPRIINSSPEQFVLIASAFNGTKPTFKDLMTGAEG. A helical membrane pass occupies residues 532-552; sequence ITGISMVILTTIAFTLASTHF. Topologically, residues 553–574 are extracellular; that stretch reads RRNRVRLPAPLDRLTGFNAFWY. The chain crosses the membrane as a helical span at residues 575–595; the sequence is THHLLVVVYIMLIVHGTFLFF. Topologically, residues 596-603 are cytoplasmic; that stretch reads ADKWYQKT. The helical transmembrane segment at 604–621 threads the bilayer; the sequence is TWMYISVPLVLYVAERSL. Residues 622–750 are Extracellular-facing; that stretch reads RACRSKHYSV…PYGAPAQDYR (129 aa). In terms of domain architecture, FAD-binding FR-type spans 626–748; it reads SKHYSVKILK…DGPYGAPAQD (123 aa). A helical transmembrane segment spans residues 751 to 771; that stretch reads SYDVLLLIGLGIGATPFISIL. Topologically, residues 772–952 are cytoplasmic; sequence KDLLNNSRDE…TRFEFHKEHF (181 aa).

It belongs to the RBOH (TC 5.B.1.3) family. Monomer and homodimer. Expressed in roots, inflorescences, leaves and stems.

The protein resides in the membrane. Functionally, calcium-dependent NADPH oxidase that generates superoxide. This is Respiratory burst oxidase homolog protein E (RBOHE) from Arabidopsis thaliana (Mouse-ear cress).